The following is a 635-amino-acid chain: Threonine--tRNA ligase (635 aa).

Residues Met-1 to Thr-61 form the TGS domain. Residues Asp-242 to Pro-532 are catalytic. Zn(2+) is bound by residues Cys-333, His-384, and His-509.

It belongs to the class-II aminoacyl-tRNA synthetase family. As to quaternary structure, homodimer. Requires Zn(2+) as cofactor.

The protein resides in the cytoplasm. It carries out the reaction tRNA(Thr) + L-threonine + ATP = L-threonyl-tRNA(Thr) + AMP + diphosphate + H(+). Catalyzes the attachment of threonine to tRNA(Thr) in a two-step reaction: L-threonine is first activated by ATP to form Thr-AMP and then transferred to the acceptor end of tRNA(Thr). Also edits incorrectly charged L-seryl-tRNA(Thr). This chain is Threonine--tRNA ligase, found in Clostridium botulinum (strain 657 / Type Ba4).